The following is a 436-amino-acid chain: Serine protease inhibitor A6 (436 aa).

The N-terminal stretch at 1–16 (MHLLVYLSLFFALALA) is a signal peptide. Residues 26–60 (KHRHRHEQQGHHDSAKHGHQKDKQQQEQIKNDEGK) are disordered. Residues 32–60 (EQQGHHDSAKHGHQKDKQQQEQIKNDEGK) are compositionally biased toward basic and acidic residues. Asn-260 and Asn-289 each carry an N-linked (GlcNAc...) asparagine glycan.

Belongs to the serpin family. As to expression, liver.

It is found in the secreted. The protein localises to the extracellular space. Its function is as follows. Not yet known. The sequence is that of Serine protease inhibitor A6 (serpina6) from Xenopus laevis (African clawed frog).